The following is a 196-amino-acid chain: MRLCDRDIEIWLKKNKLIITPRPSKDRINGATVDLKLWNKFRIFESYNAAYIDFDLISSLKNNNSNSWNYNMTNEIKISEKEKFFLHPGELVLALTLESITIPDNLIGWLDGRSSLARFGLMVHATSHRIDPGWSGNIVLEFYNSGKLPILLRPNMIIGSISFELLTNSAIRPYNKKKNAKYLNQIDTVIKINNLT.

DCTP is bound by residues 113–118 (RSSLAR), Asp-131, 139–141 (VLE), Tyr-174, Lys-181, and Gln-185. Glu-141 serves as the catalytic Proton donor/acceptor.

The protein belongs to the dCTP deaminase family. As to quaternary structure, homotrimer.

The catalysed reaction is dCTP + H2O + H(+) = dUTP + NH4(+). It functions in the pathway pyrimidine metabolism; dUMP biosynthesis; dUMP from dCTP (dUTP route): step 1/2. Its function is as follows. Catalyzes the deamination of dCTP to dUTP. The protein is dCTP deaminase of Wigglesworthia glossinidia brevipalpis.